The following is a 72-amino-acid chain: Large ribosomal subunit protein uL29 (72 aa).

It belongs to the universal ribosomal protein uL29 family.

The sequence is that of Large ribosomal subunit protein uL29 from Caldicellulosiruptor bescii (strain ATCC BAA-1888 / DSM 6725 / KCTC 15123 / Z-1320) (Anaerocellum thermophilum).